The following is a 223-amino-acid chain: N-terminal Xaa-Pro-Lys N-methyltransferase 1 (223 aa).

Met1 is subject to N-acetylmethionine. Thr2 is subject to N-acetylthreonine; in N-terminal Xaa-Pro-Lys N-methyltransferase 1, N-terminally processed. Residues Gly69, Arg74, 91 to 93 (DVT), 119 to 120 (LQ), and Gln135 each bind S-adenosyl-L-methionine.

It belongs to the methyltransferase superfamily. NTM1 family.

It localises to the nucleus. The enzyme catalyses N-terminal L-alanyl-L-prolyl-L-lysyl-[protein] + 3 S-adenosyl-L-methionine = N-terminal N,N,N-trimethyl-L-alanyl-L-prolyl-L-lysyl-[protein] + 3 S-adenosyl-L-homocysteine + 3 H(+). The catalysed reaction is N-terminal L-seryl-L-prolyl-L-lysyl-[protein] + 3 S-adenosyl-L-methionine = N-terminal N,N,N-trimethyl-L-seryl-L-prolyl-L-lysyl-[protein] + 3 S-adenosyl-L-homocysteine + 3 H(+). It carries out the reaction N-terminal L-prolyl-L-prolyl-L-lysyl-[protein] + 2 S-adenosyl-L-methionine = N-terminal N,N-dimethyl-L-prolyl-L-prolyl-L-lysyl-[protein] + 2 S-adenosyl-L-homocysteine + 2 H(+). Its function is as follows. Distributive alpha-N-methyltransferase that methylates the N-terminus of target proteins containing the N-terminal motif [Ala/Gly/Pro/Ser]-Pro-Lys when the initiator Met is cleaved. Specifically catalyzes mono-, di- or tri-methylation of the exposed alpha-amino group of the Ala, Gly or Ser residue in the [Ala/Gly/Ser]-Pro-Lys motif and mono- or di-methylation of Pro in the Pro-Pro-Lys motif. Some of the substrates may be primed by NTMT2-mediated monomethylation. Catalyzes the trimethylation of the N-terminal Gly in CENPA (after removal of Met-1). Responsible for the N-terminal methylation of KLHL31, MYL2, MYL3, RB1, RCC1, RPL23A and SET. Required during mitosis for normal bipolar spindle formation and chromosome segregation via its action on RCC1. The chain is N-terminal Xaa-Pro-Lys N-methyltransferase 1 (NTMT1) from Bos taurus (Bovine).